Here is a 360-residue protein sequence, read N- to C-terminus: Peptide chain release factor 1 (360 aa).

Glutamine 235 is modified (N5-methylglutamine).

This sequence belongs to the prokaryotic/mitochondrial release factor family. Post-translationally, methylated by PrmC. Methylation increases the termination efficiency of RF1.

Its subcellular location is the cytoplasm. In terms of biological role, peptide chain release factor 1 directs the termination of translation in response to the peptide chain termination codons UAG and UAA. This Methylobacillus flagellatus (strain ATCC 51484 / DSM 6875 / VKM B-1610 / KT) protein is Peptide chain release factor 1.